Consider the following 349-residue polypeptide: Lipoyl synthase (349 aa).

Residues C55, C60, C66, C81, C85, C88, and S292 each coordinate [4Fe-4S] cluster. Positions 67 to 281 constitute a Radical SAM core domain; sequence WEDREATFLI…SDAAYELGIK (215 aa). Residues 321-349 form a disordered region; it reads LDSTTSQEASTLLERYGASEDTPVTASRR.

The protein belongs to the radical SAM superfamily. Lipoyl synthase family. It depends on [4Fe-4S] cluster as a cofactor.

It is found in the cytoplasm. The enzyme catalyses [[Fe-S] cluster scaffold protein carrying a second [4Fe-4S](2+) cluster] + N(6)-octanoyl-L-lysyl-[protein] + 2 oxidized [2Fe-2S]-[ferredoxin] + 2 S-adenosyl-L-methionine + 4 H(+) = [[Fe-S] cluster scaffold protein] + N(6)-[(R)-dihydrolipoyl]-L-lysyl-[protein] + 4 Fe(3+) + 2 hydrogen sulfide + 2 5'-deoxyadenosine + 2 L-methionine + 2 reduced [2Fe-2S]-[ferredoxin]. It functions in the pathway protein modification; protein lipoylation via endogenous pathway; protein N(6)-(lipoyl)lysine from octanoyl-[acyl-carrier-protein]: step 2/2. In terms of biological role, catalyzes the radical-mediated insertion of two sulfur atoms into the C-6 and C-8 positions of the octanoyl moiety bound to the lipoyl domains of lipoate-dependent enzymes, thereby converting the octanoylated domains into lipoylated derivatives. The polypeptide is Lipoyl synthase (Corynebacterium jeikeium (strain K411)).